Here is a 293-residue protein sequence, read N- to C-terminus: MDDSVNTRYPILLVHGLFGFDRIGSHHYFHGIKQALNECGASVFVPIISAANDNEARGDQLLKQIHNLRRQVGAQRVNLIGHSQGALTARYVAAIAPELIASVTSVSGPNHGSELADRLRLAFVPGRLGETVAAALTTSFSAFLSALSGHPRLPQNALNALNALTTDGVAAFNRQYPQGLPDRWGGMGPAQVNAVHYYSWSGIIKGSRLAESLNLLDPLHNALRVFDSFFTRETRENDGMVGRFSSHLGQVIRSDYPLDHLDTINHMARGSRRRINPVELYIEHAKRLKEAGL.

Residues Pro-10–Gly-206 form the AB hydrolase-1 domain. Leu-17 serves as a coordination point for substrate. The active-site Nucleophile is the Ser-83. Residue Gln-84 participates in substrate binding. Ca(2+) is bound at residue Asp-217. Active-site charge relay system residues include Asp-238 and His-260. Residues Asp-262, His-266, and Arg-269 each coordinate Ca(2+).

This sequence belongs to the AB hydrolase superfamily. Pseudomonas lipase family. Requires Ca(2+) as cofactor.

It is found in the secreted. The enzyme catalyses a triacylglycerol + H2O = a diacylglycerol + a fatty acid + H(+). Functionally, catalyzes the hydrolysis of triacylglycerols, with the highest activity with tributyrin (C4), lower activity with tricaprylin (C8), and much lower activity with triacetin (C2), trilaurin (C12) and triolein (C18). This is Triacylglycerol lipase (lips) from Pseudomonas fragi.